We begin with the raw amino-acid sequence, 299 residues long: uncharacterized protein (299 aa).

Transmembrane regions (helical) follow at residues 32-52, 56-76, 199-219, 220-240, 246-266, and 273-293; these read FILL…YLHL, SMII…SILY, LAIG…LLGA, YLIA…VKPE, FEIV…PIFG, and FLIS…ILKF.

It is found in the cell membrane. This is an uncharacterized protein from Methanocaldococcus jannaschii (strain ATCC 43067 / DSM 2661 / JAL-1 / JCM 10045 / NBRC 100440) (Methanococcus jannaschii).